A 235-amino-acid polypeptide reads, in one-letter code: Purine nucleoside phosphorylase DeoD-type (235 aa).

Residue His4 participates in a purine D-ribonucleoside binding. Phosphate is bound by residues Gly20, Arg24, Arg43, and 87 to 90 (RVGT). A purine D-ribonucleoside contacts are provided by residues Glu162, 179–181 (EME), and 203–204 (SD). The Proton donor role is filled by Asp204.

It belongs to the PNP/UDP phosphorylase family. In terms of assembly, homohexamer; trimer of homodimers.

It carries out the reaction a purine D-ribonucleoside + phosphate = a purine nucleobase + alpha-D-ribose 1-phosphate. The enzyme catalyses a purine 2'-deoxy-D-ribonucleoside + phosphate = a purine nucleobase + 2-deoxy-alpha-D-ribose 1-phosphate. Catalyzes the reversible phosphorolytic breakdown of the N-glycosidic bond in the beta-(deoxy)ribonucleoside molecules, with the formation of the corresponding free purine bases and pentose-1-phosphate. This chain is Purine nucleoside phosphorylase DeoD-type, found in Bacillus cereus (strain ATCC 14579 / DSM 31 / CCUG 7414 / JCM 2152 / NBRC 15305 / NCIMB 9373 / NCTC 2599 / NRRL B-3711).